We begin with the raw amino-acid sequence, 77 residues long: Small ribosomal subunit protein bS21 (77 aa).

Positions 38-52 (KPSEKRAREKAEAVR) are enriched in basic and acidic residues. The disordered stretch occupies residues 38-77 (KPSEKRAREKAEAVRRTRKLARKRAQREGLISNGRGSPLK). The segment covering 53–62 (RTRKLARKRA) has biased composition (basic residues).

It belongs to the bacterial ribosomal protein bS21 family.

This chain is Small ribosomal subunit protein bS21, found in Bartonella henselae (strain ATCC 49882 / DSM 28221 / CCUG 30454 / Houston 1) (Rochalimaea henselae).